A 201-amino-acid chain; its full sequence is Rho GDP-dissociation inhibitor 2 (201 aa).

The tract at residues 1–38 (MTEKAPEPHVEEDDDDELDSKLNYKPPPQKSLKELQEM) is disordered. Thr2 is subject to N-acetylthreonine. N6-acetyllysine is present on Lys21. Position 24 is a phosphotyrosine (Tyr24). Residues Lys25, Lys40, Lys47, Lys102, and Lys124 each carry the N6-acetyllysine modification. Residue Ser145 is modified to Phosphoserine. Lys175 is modified (N6-acetyllysine).

The protein belongs to the Rho GDI family. Interacts with RHOA. Interacts with RAC1. Interacts with RAC2. Interacts with CDC42. In terms of tissue distribution, detected in bone marrow, thymus and spleen.

Its subcellular location is the cytoplasm. It localises to the cytosol. Regulates the GDP/GTP exchange reaction of the Rho proteins by inhibiting the dissociation of GDP from them, and the subsequent binding of GTP to them. Regulates reorganization of the actin cytoskeleton mediated by Rho family members. The chain is Rho GDP-dissociation inhibitor 2 (ARHGDIB) from Homo sapiens (Human).